The sequence spans 138 residues: Putative pre-16S rRNA nuclease (138 aa).

The protein belongs to the YqgF nuclease family.

It localises to the cytoplasm. Its function is as follows. Could be a nuclease involved in processing of the 5'-end of pre-16S rRNA. The protein is Putative pre-16S rRNA nuclease of Geobacillus thermodenitrificans (strain NG80-2).